Consider the following 205-residue polypeptide: Large ribosomal subunit protein uL4 (205 aa).

The segment at 43-78 (ARAGTKAQKTRSEVAGGGKKPWRQKGTGNARAGTIR) is disordered.

Belongs to the universal ribosomal protein uL4 family. As to quaternary structure, part of the 50S ribosomal subunit.

Its function is as follows. One of the primary rRNA binding proteins, this protein initially binds near the 5'-end of the 23S rRNA. It is important during the early stages of 50S assembly. It makes multiple contacts with different domains of the 23S rRNA in the assembled 50S subunit and ribosome. Forms part of the polypeptide exit tunnel. This is Large ribosomal subunit protein uL4 from Halorhodospira halophila (strain DSM 244 / SL1) (Ectothiorhodospira halophila (strain DSM 244 / SL1)).